Consider the following 141-residue polypeptide: Large ribosomal subunit protein uL11 (141 aa).

Belongs to the universal ribosomal protein uL11 family. As to quaternary structure, part of the ribosomal stalk of the 50S ribosomal subunit. Interacts with L10 and the large rRNA to form the base of the stalk. L10 forms an elongated spine to which L12 dimers bind in a sequential fashion forming a multimeric L10(L12)X complex. One or more lysine residues are methylated.

Its function is as follows. Forms part of the ribosomal stalk which helps the ribosome interact with GTP-bound translation factors. This is Large ribosomal subunit protein uL11 from Lactococcus lactis subsp. cremoris (strain MG1363).